The chain runs to 496 residues: Angiopoietin-2 (496 aa).

Residues 1-18 (MWQLVFFALSCDLVLAAA) form the signal peptide. 6 N-linked (GlcNAc...) asparagine glycosylation sites follow: N89, N119, N133, N151, N240, and N304. A coiled-coil region spans residues 130–255 (NLLNQTAEQT…KQQHDLMETV (126 aa)). The region spanning 275-495 (KEEQIIFRDC…ATTMMIRPAD (221 aa)) is the Fibrinogen C-terminal domain. An intrachain disulfide couples C284 to C313. D429, D431, C433, and C435 together coordinate Ca(2+). 2 disulfides stabilise this stretch: C433/C435 and C437/C450.

In terms of assembly, interacts with TEK/TIE2, competing for the same binding site as ANGPT1. Interacts with ITGA5. Interacts with SVEP1/polydom. Interacts with THBD; this interaction significantly inhibits the generation of activated PC and TAFIa/CPB2 by the thrombin/thrombomodulin complex.

It localises to the secreted. Functionally, binds to TEK/TIE2, competing for the ANGPT1 binding site, and modulating ANGPT1 signaling. Can induce tyrosine phosphorylation of TEK/TIE2 in the absence of ANGPT1. In the absence of angiogenic inducers, such as VEGF, ANGPT2-mediated loosening of cell-matrix contacts may induce endothelial cell apoptosis with consequent vascular regression. In concert with VEGF, it may facilitate endothelial cell migration and proliferation, thus serving as a permissive angiogenic signal. Involved in the regulation of lymphangiogenesis. This Sus scrofa (Pig) protein is Angiopoietin-2 (ANGPT2).